Reading from the N-terminus, the 681-residue chain is Minichromosome maintenance domain-containing protein 2 (681 aa).

A Phosphoserine modification is found at Ser-292. The 89-residue stretch at 533 to 621 folds into the MCM domain; that stretch reads KQFTTEDFEK…LIAALLFEIS (89 aa).

Its function is as follows. Plays an important role in meiotic recombination and associated DNA double-strand break repair. This Rattus norvegicus (Rat) protein is Minichromosome maintenance domain-containing protein 2 (Mcmdc2).